The following is a 384-amino-acid chain: MKRRHWSHPSCGLLLLVAVFCLLLVFRCSQLRHSGDGAAAAAPDGGAGRNDGDDVDERLVELAAVDPAAMAVLQAAKRLLEGNLARAPERHRDVALRGLREWVGKQERFDPGVMSELVELIKRPIDRYNGDGGGGGEGEGRRYASCAVVGNSGILLAAEHGELIDGHELVVRLNNAPAGDGRYARHVGARTGLAFLNSNVLSQCAVPRRGACFCRAYGEGVPILTYMCNAAHFVEHAVCNNASSSSSGAADATAAAPVIVTDPRLDALCARIVKYYSLRRFARETGRPAEEWARRHEEGMFHYSSGMQAVVAAAGVCDRVSVFGFGKDASARHHYHTLQRRELDLHDYEAEYEFYRDLESRPEAIPFLRQRNSGFRLPPVSFYR.

The Cytoplasmic portion of the chain corresponds to 1–5 (MKRRH). Residues 6–26 (WSHPSCGLLLLVAVFCLLLVF) traverse the membrane as a helical; Signal-anchor for type II membrane protein segment. Topologically, residues 27-384 (RCSQLRHSGD…FRLPPVSFYR (358 aa)) are lumenal. Asn241 carries an N-linked (GlcNAc...) asparagine glycan.

This sequence belongs to the glycosyltransferase 29 family.

The protein localises to the golgi apparatus membrane. Its function is as follows. Possesses sialyltransferase-like activity in vitro. Transfers sialic acid to the glycoprotein asialofetuin. The transferred sialic acid is linked to galactose of Gal-beta-1,3-GalNAc through alpha-2,6-linkage. The polypeptide is Sialyltransferase-like protein 3 (Oryza sativa subsp. japonica (Rice)).